Consider the following 404-residue polypeptide: Growth/differentiation factor 6-A (404 aa).

The first 24 residues, 1-24 (MDALRAVAFYALFVFLWSLPCCQS), serve as a signal peptide directing secretion. Residues 25 to 284 (AALISQKRSK…LQFKARRRRR (260 aa)) constitute a propeptide that is removed on maturation. A glycan (N-linked (GlcNAc...) asparagine) is linked at asparagine 91. The segment at 263–304 (KSRGDDDEEESALQFKARRRRRTALNNRHGKRHGKKSKSRCS) is disordered. Positions 278-304 (KARRRRRTALNNRHGKRHGKKSKSRCS) are enriched in basic residues. Disulfide bonds link cysteine 303-cysteine 369, cysteine 332-cysteine 401, and cysteine 336-cysteine 403.

This sequence belongs to the TGF-beta family. In terms of assembly, homodimer; disulfide-linked. In terms of tissue distribution, first expressed in late gastrula stage embryos (9.5 hours post fertilization (hpf)) in anterior neuroectoderm corresponding to the future dorsal part of the brain. Shortly after tailbud formation (11 hpf), expression expands to the entire neural region and is subsequently expressed in derivatives of the lateral neural plate and migrating neural crest cells, with the future midbrain and hindbrain showing strong expression. Also expressed weakly and transiently in the posterior embryo from 11.5 hpf to 15 hpf in the lateral mesoderm, and in ectoderm above the neural keel. At 14 hpf, expressed along the entire length of the embryo and starting around the 16-somite stage, expressed in the dorsal quadrant of the retina, representing the distal tip of the eye anlage. At this stage, also expressed in the hatching gland and the hypochord. At 24 hpf, expressed in the roof plate outlining the fourth brain ventricle, in the posterior hypochord, the primitive gut endoderm, the ventral tail mesenchyme, the dorsal part of the neural tube and the dorsal fin. Weakly expressed in the dorsal part of the posterior spinal cord and in blood cell precursors.

It is found in the secreted. Functionally, growth factor that controls proliferation and cellular differentiation in the retina. Plays a key role in regulating apoptosis during retinal development. Establishes dorsal-ventral positional information in the retina and controls the formation of the retinotectal map. Functions maternally in dorsal/ventral patterning to induce the expression of the zygotic bmp2b and bmp4 genes and ventralize embryos. Zygotic expression does not appear to regulate axis specification, but instead functions to establish the integrity of the axial vessels during embryonic development. May be involved in maintaining the identity of cells of the dorsal-most neural tube and of at least a subset of neural crest cells. This is Growth/differentiation factor 6-A (gdf6a) from Danio rerio (Zebrafish).